The following is a 351-amino-acid chain: tRNA pseudouridine synthase D (351 aa).

The active-site Nucleophile is the Asp81. The region spanning 158-304 (GVPNYFGSQR…MRHERRAIEL (147 aa)) is the TRUD domain.

Belongs to the pseudouridine synthase TruD family.

The catalysed reaction is uridine(13) in tRNA = pseudouridine(13) in tRNA. Responsible for synthesis of pseudouridine from uracil-13 in transfer RNAs. In Aliivibrio fischeri (strain MJ11) (Vibrio fischeri), this protein is tRNA pseudouridine synthase D.